We begin with the raw amino-acid sequence, 420 residues long: ATP phosphoribosyltransferase regulatory subunit (420 aa).

This sequence belongs to the class-II aminoacyl-tRNA synthetase family. HisZ subfamily. Heteromultimer composed of HisG and HisZ subunits.

It is found in the cytoplasm. The protein operates within amino-acid biosynthesis; L-histidine biosynthesis; L-histidine from 5-phospho-alpha-D-ribose 1-diphosphate: step 1/9. Functionally, required for the first step of histidine biosynthesis. May allow the feedback regulation of ATP phosphoribosyltransferase activity by histidine. This chain is ATP phosphoribosyltransferase regulatory subunit, found in Bacillus mycoides (strain KBAB4) (Bacillus weihenstephanensis).